Here is an 898-residue protein sequence, read N- to C-terminus: Filament-like plant protein 7 (898 aa).

Coiled coils occupy residues 23-224 (EVVA…TAEA) and 287-320 (EKIN…LQFS). 3 disordered regions span residues 429 to 482 (DNRP…DIKS), 693 to 723 (PGNQ…KLEE), and 777 to 835 (KSNN…GGNS). The span at 434 to 459 (SSPICSSDSISATGPVENESNENSSE) shows a compositional bias: low complexity. Positions 460-469 (ATKTSGTVYS) are enriched in polar residues. The stretch at 703–764 (VEEEANDKTA…KALTNSKETA (62 aa)) forms a coiled coil. Basic and acidic residues predominate over residues 808–822 (MKAEDHNTGESKDQK).

It belongs to the FPP family. As to quaternary structure, interacts with WPP/MAF proteins.

In Arabidopsis thaliana (Mouse-ear cress), this protein is Filament-like plant protein 7 (FPP7).